We begin with the raw amino-acid sequence, 419 residues long: 26S proteasome regulatory subunit 8 homolog A (419 aa).

The residue at position 2 (A2) is an N-acetylalanine. Residue 202 to 209 (GPPGTGKT) participates in ATP binding. K406 is covalently cross-linked (Glycyl lysine isopeptide (Lys-Gly) (interchain with G-Cter in ubiquitin)).

It belongs to the AAA ATPase family. As to quaternary structure, component of the 19S regulatory particle (RP/PA700) base subcomplex of the 26S proteasome. The 26S proteasome is composed of a core protease (CP), known as the 20S proteasome, capped at one or both ends by the 19S regulatory particle (RP/PA700). The RP/PA700 complex is composed of at least 17 different subunits in two subcomplexes, the base and the lid, which form the portions proximal and distal to the 20S proteolytic core, respectively.

The protein localises to the cytoplasm. It is found in the nucleus. In terms of biological role, the 26S proteasome is involved in the ATP-dependent degradation of ubiquitinated proteins. The regulatory (or ATPase) complex confers ATP dependency and substrate specificity to the 26S complex. In Arabidopsis thaliana (Mouse-ear cress), this protein is 26S proteasome regulatory subunit 8 homolog A (RPT6A).